A 204-amino-acid polypeptide reads, in one-letter code: Ras-related protein Rab-7L1 (204 aa).

Residues S33, K34, H35, Y36, K37, and T39 each contribute to the GTP site. Positions 36–44 (YKSTVGVDF) match the Effector region motif. Residue T71 is modified to Phosphothreonine; by LRRK2. S72 bears the Phosphoserine mark. 3 residues coordinate GTP: K126, V156, and K157. 2 S-geranylgeranyl cysteine lipidation sites follow: C203 and C204.

Belongs to the small GTPase superfamily. Rab family. In terms of assembly, interacts with LRRK2 (via the N-terminus); this interaction is direct and stimulates kinase activity. In terms of tissue distribution, expressed predominantly in kidney and much less in brain, heart, muscle, fat, liver, spleen, adrenal gland, ovary, thymus and lung. Not expressed in testis and intestine.

The protein localises to the cell membrane. It is found in the cytoplasm. The protein resides in the perinuclear region. It localises to the golgi apparatus. Its subcellular location is the golgi apparatus membrane. The protein localises to the trans-Golgi network. It is found in the cytoskeleton. The small GTPases Rab are key regulators in vesicle trafficking. Essential for maintaining the integrity of endosome-trans-Golgi network structure. Together with LRRK2, plays a role in the retrograde trafficking pathway for recycling proteins, such as mannose 6 phosphate receptor (M6PR), between lysosomes and the Golgi apparatus in a retromer-dependent manner. Recruits LRRK2 to the Golgi apparatus and stimulates LRRK2 kinase activity. Stimulates phosphorylation of RAB10 'Thr-73' by LRRK2. Regulates also neuronal process morphology in the intact central nervous system (CNS). The sequence is that of Ras-related protein Rab-7L1 (Rab29) from Rattus norvegicus (Rat).